A 402-amino-acid polypeptide reads, in one-letter code: Protein arginine methyltransferase NDUFAF7 homolog, mitochondrial (402 aa).

The protein belongs to the NDUFAF7 family.

The protein localises to the mitochondrion. It catalyses the reaction L-arginyl-[protein] + 2 S-adenosyl-L-methionine = N(omega),N(omega)'-dimethyl-L-arginyl-[protein] + 2 S-adenosyl-L-homocysteine + 2 H(+). Arginine methyltransferase involved in the assembly or stability of mitochondrial NADH:ubiquinone oxidoreductase complex (complex I). The protein is Protein arginine methyltransferase NDUFAF7 homolog, mitochondrial of Saccharomyces cerevisiae (strain ATCC 204508 / S288c) (Baker's yeast).